Consider the following 392-residue polypeptide: Lysine acetyltransferase (392 aa).

The enzyme catalyses L-lysine + acetyl-CoA = N(6)-acetyl-L-lysine + CoA + H(+). The protein operates within amino-acid degradation; L-lysine degradation via acetylation pathway; glutarate from L-lysine: step 1/6. With respect to regulation, activity is inhibited by 5-aminovalerate. Its function is as follows. Lysine N-6-acetyl transferase (LAT) that catalyzes the first step of the lysine degradation pathway. The sequence is that of Lysine acetyltransferase from Yarrowia lipolytica (strain CLIB 122 / E 150) (Yeast).